Consider the following 365-residue polypeptide: tRNA(Met) cytidine acetate ligase (365 aa).

ATP is bound by residues 7–20 (IAEF…HKYL), Gly-96, Asn-152, and Arg-175.

It belongs to the TmcAL family.

It is found in the cytoplasm. It carries out the reaction cytidine(34) in elongator tRNA(Met) + acetate + ATP = N(4)-acetylcytidine(34) in elongator tRNA(Met) + AMP + diphosphate. Functionally, catalyzes the formation of N(4)-acetylcytidine (ac(4)C) at the wobble position of elongator tRNA(Met), using acetate and ATP as substrates. First activates an acetate ion to form acetyladenylate (Ac-AMP) and then transfers the acetyl group to tRNA to form ac(4)C34. The polypeptide is tRNA(Met) cytidine acetate ligase (Streptococcus pneumoniae (strain 70585)).